A 253-amino-acid chain; its full sequence is Nurim homolog (253 aa).

Residues 1–2 (MA) are Nuclear-facing. Residues 3-30 (TFAKVMLLLSSVATFGYTFFVVGKLMLF) traverse the membrane as a helical segment. Residues 31-56 (LSTPRSISKAHTWIFNLLDNKSRLET) are Perinuclear space-facing. A helical membrane pass occupies residues 57 to 78 (AYGPIVFDTLYLIGFIFQHSFL). The Nuclear segment spans residues 79-96 (KSALVKNLWRKLGLAAAE). Residues 97–113 (RTIYSLTSSICLHYLLK) form a helical membrane-spanning segment. The Perinuclear space segment spans residues 114–132 (NWLPAQSIVLWQVDVDESA). A helical membrane pass occupies residues 133-161 (PLWWTFVVTHGLGWAVIFGGSLIMDLPEL). Residues 162–188 (LGVKQVYYDLKEYGEPVAYKSSELRNL) are Nuclear-facing. The chain crosses the membrane as a helical span at residues 189 to 207 (YSHVRHPSFVGLSVILFAT). At 208 to 213 (NVMSLD) the chain is on the perinuclear space side. A helical transmembrane segment spans residues 214–231 (RLLLASLLTVYMYVAWST). At 232–253 (DDKDVAYQKQQLRNKKHELKAQ) the chain is on the nuclear side.

The protein belongs to the nurim family.

Its subcellular location is the nucleus inner membrane. This chain is Nurim homolog (nrm), found in Drosophila pseudoobscura pseudoobscura (Fruit fly).